We begin with the raw amino-acid sequence, 228 residues long: 2,3-bisphosphoglycerate-dependent phosphoglycerate mutase (228 aa).

Substrate-binding positions include 8–15 (RHGQSQWN), 21–22 (TG), R60, 87–90 (ERHY), K98, 114–115 (RR), and 180–181 (GN). The Tele-phosphohistidine intermediate role is filled by H9. Catalysis depends on E87, which acts as the Proton donor/acceptor.

It belongs to the phosphoglycerate mutase family. BPG-dependent PGAM subfamily. As to quaternary structure, homodimer.

It catalyses the reaction (2R)-2-phosphoglycerate = (2R)-3-phosphoglycerate. It participates in carbohydrate degradation; glycolysis; pyruvate from D-glyceraldehyde 3-phosphate: step 3/5. Catalyzes the interconversion of 2-phosphoglycerate and 3-phosphoglycerate. This Novosphingobium aromaticivorans (strain ATCC 700278 / DSM 12444 / CCUG 56034 / CIP 105152 / NBRC 16084 / F199) protein is 2,3-bisphosphoglycerate-dependent phosphoglycerate mutase.